The sequence spans 97 residues: UPF0729 protein GD16342 (97 aa).

The interval 64 to 97 (KPEKASVGPAEESQNPPLNAIAAETEVDESKKEI) is disordered. At serine 69 the chain carries Phosphoserine.

Belongs to the UPF0729 family.

This is UPF0729 protein GD16342 from Drosophila simulans (Fruit fly).